Reading from the N-terminus, the 1074-residue chain is MSRGHNIKKSLTPQISCSTSESYKQLDFLPDKLRAKLLPFQKDGITFALRRDGRCMVADEMGLGKTVQAIGIAYFYKEEWPLLIVVPSSLRYPWTEEIEKWIPELSPEEINVIQNKTDVGRISTSKVTVLGYGLLTTDAETLIDALNNQNFKVVIVDESHYMKSRSATRSRILLPIVQKAKRAILLTGTPALGRPEELFMQIEALFPQKFGTWTEYAKRYCNAHVRYFGRRSQWDCRGASNLNELHQLLSDIMIRRLKTEVLTQLPPKIRQRIPFDLPSAAAKELNSSFEEWEKLMRDPYSGATETVMGLITRMFKQTAIAKAGAVKDYIKMMLQNDSLKFLVFAHHLSMLQACTEAVIENKTRYIRIDGSVPSSERIHLVNQFQKDPETRVAILSIQAAGQGLTFTAATHVVFAELYWDPGHIKQAEDRAHRIGQCSSVNIHYLIANGTLDTLMWGMLNRKAQVTGSTLNGRKEKLQAEEGDKEKWDFLQFAEAWTPNERSEELRDEMLFTHFEKEKQRDIRSFFLPNAKKRQLETSCDESRVSQEKNTIVPADPVKTATRGDESDLEPEAKKLKSVAIDDPCRPPEEQPCRPGQAEALLTFGICKAKAQATTPAFCGEGWQCAFCTYINNSVLPYCEMCENPRGGAVPQIDSLNQTQNKNKNEKDDSQDTSKKIQTSSDGEKQVLAHSTPEPLAKSKEEISTTESEDRLTPQPGDEQLKNWPVYDTLMFCASKNTDRIHVYTKDGNQMNCNFIPLDIKLDLWEDLPASFQLKQNRSLILRFVREWSSLTAMKQKIIKKSGQLFRSPVLALEEIAKQQTKQNSTKRYITKEDVAAASMDKVKNDGGHVRLITKGPKPGDPSTKEFLEGGECVPFLNPCTAQGDLILKASTSKGYLQAVDNEGNPLCLRCQQPTCQTKQERKADAWDSRFCSLKCQEEFWIRSNNSYLRAKVFEIEHGVCQLCNLNAQELFLRLRDAPKSQRKSLLDATWTSKLPLEQLNEMIRSPGEGHFWQVDHIKPVSGGGGQCSLDNLQTLCTVCHRERTAQQAKERSQVRRQSLASNHGSDITRFLVKK.

The 163-residue stretch at 46–208 (TFALRRDGRC…FMQIEALFPQ (163 aa)) folds into the Helicase ATP-binding domain. The DNA annealing helicase activity stretch occupies residues 46–481 (TFALRRDGRC…GRKEKLQAEE (436 aa)). Residue 59-66 (DEMGLGKT) participates in ATP binding. A DEAH box motif is present at residues 157 to 160 (DESH). The Helicase C-terminal domain occupies 325–481 (AVKDYIKMML…GRKEKLQAEE (157 aa)). Residues 519–526 (QRDIRSFF) carry the PIP-box motif. S566 is modified (phosphoserine). The RanBP2-type zinc finger occupies 617-647 (FCGEGWQCAFCTYINNSVLPYCEMCENPRGG). The tract at residues 659-719 (QNKNKNEKDD…RLTPQPGDEQ (61 aa)) is disordered. Basic and acidic residues-rich tracts occupy residues 662–674 (NKNE…DTSK) and 696–711 (AKSK…EDRL). The HNH domain maps to 1006 to 1046 (PGEGHFWQVDHIKPVSGGGGQCSLDNLQTLCTVCHRERTAQ). The segment at 1006-1074 (PGEGHFWQVD…SDITRFLVKK (69 aa)) is endonuclease activity. Residues 1069–1073 (RFLVK) carry the APIM motif motif.

Belongs to the SNF2/RAD54 helicase family. In terms of assembly, interacts (via PIP-box and RanBP2-type zinc finger) with PCNA (when PCNA is polyubiquitinated via 'Lys-63'-linked polyubiquitin).

The protein resides in the nucleus. Its subcellular location is the chromosome. Its function is as follows. DNA annealing helicase and endonuclease required to maintain genome stability at stalled or collapsed replication forks by facilitating fork restart and limiting inappropriate recombination that could occur during template switching events. Recruited to the sites of stalled DNA replication by polyubiquitinated PCNA and acts as a structure-specific endonuclease that cleaves the replication fork D-loop intermediate, generating an accessible 3'-OH group in the template of the leading strand, which is amenable to extension by DNA polymerase. In addition to endonuclease activity, also catalyzes the fork regression via annealing helicase activity in order to prevent disintegration of the replication fork and the formation of double-strand breaks. The chain is DNA annealing helicase and endonuclease ZRANB3 (ZRANB3) from Bos taurus (Bovine).